The primary structure comprises 905 residues: DNA mismatch repair protein MutS (905 aa).

Residues 1–95 (MELSLQGSLF…PAWGHHSQLK (95 aa)) are disordered. Over residues 38–50 (NLSDADLSKDALA) the composition is skewed to basic and acidic residues. An ATP-binding site is contributed by 721–728 (GPNASGKS).

Belongs to the DNA mismatch repair MutS family.

In terms of biological role, this protein is involved in the repair of mismatches in DNA. It is possible that it carries out the mismatch recognition step. This protein has a weak ATPase activity. This chain is DNA mismatch repair protein MutS, found in Synechococcus sp. (strain CC9902).